The primary structure comprises 421 residues: Anhydromevalonate phosphate decarboxylase (421 aa).

Residues asparagine 131 and glutamate 194 each contribute to the Mn(2+) site. The Proton acceptor role is filled by aspartate 240.

Belongs to the UbiD family. Requires prenylated FMN as cofactor. It depends on Mn(2+) as a cofactor.

It carries out the reaction (2E)-3-methyl-5-phosphooxypent-2-enoate + H(+) = isopentenyl phosphate + CO2. The protein operates within isoprenoid biosynthesis; isopentenyl diphosphate biosynthesis via mevalonate pathway. Its function is as follows. Catalyzes the conversion of trans-anhydromevalonate 5-phosphate (tAHMP) into isopentenyl phosphate. Involved in the archaeal mevalonate (MVA) pathway, which provides fundamental precursors for isoprenoid biosynthesis, such as isopentenyl diphosphate (IPP) and dimethylallyl diphosphate (DMAPP). This Methanocaldococcus jannaschii (strain ATCC 43067 / DSM 2661 / JAL-1 / JCM 10045 / NBRC 100440) (Methanococcus jannaschii) protein is Anhydromevalonate phosphate decarboxylase.